Consider the following 339-residue polypeptide: Large ribosomal subunit protein uL10 (339 aa).

The segment at 300–339 (AAAQATPSVEEREEEEKPEEEEEEEEKEEEAIEGLGALFG) is disordered. Residues 310–331 (EREEEEKPEEEEEEEEKEEEAI) show a composition bias toward acidic residues.

It belongs to the universal ribosomal protein uL10 family. Part of the 50S ribosomal subunit. Forms part of the ribosomal stalk which helps the ribosome interact with GTP-bound translation factors. Forms a heptameric L10(L12)2(L12)2(L12)2 complex, where L10 forms an elongated spine to which the L12 dimers bind in a sequential fashion.

Functionally, forms part of the ribosomal stalk, playing a central role in the interaction of the ribosome with GTP-bound translation factors. This Archaeoglobus fulgidus (strain ATCC 49558 / DSM 4304 / JCM 9628 / NBRC 100126 / VC-16) protein is Large ribosomal subunit protein uL10.